A 1312-amino-acid chain; its full sequence is Multidrug resistance protein 3 (1312 aa).

A helical membrane pass occupies residues 51–71 (GFIDYILLIGGIIGAMAAGVL). The ABC transmembrane type-1 1 domain maps to 59-369 (IGGIIGAMAA…VAMPINALST (311 aa)). The N-linked (GlcNAc...) asparagine glycan is linked to Asn98. 5 helical membrane passes run 127-147 (IYFA…FFVL), 197-217 (KFGV…IGFS), 224-244 (LVIM…GFFA), 302-322 (VVGV…ALGS), and 344-364 (MVVF…AMPI). In terms of domain architecture, ABC transporter 1 spans 404-643 (IKLEDVQFRY…KATYYGLVKR (240 aa)). Residue 439–446 (GASGCGKS) coordinates ATP. An ABC transmembrane type-1 2 domain is found at 724-1033 (LLSFLGLIGG…LGQMIPDVGK (310 aa)). The next 2 helical transmembrane spans lie at 725-745 (LSFL…FYMI) and 776-796 (IWIL…LGLF). Asn819 carries N-linked (GlcNAc...) asparagine glycosylation. A run of 3 helical transmembrane segments spans residues 852-872 (VGNV…AFYY), 874-894 (WKVA…VFLN), and 958-978 (AFVS…SFYI). The ABC transporter 2 domain maps to 1068–1307 (IEFKDICFRY…KGFYYTLAMQ (240 aa)). 1103–1110 (GASGCGKS) contributes to the ATP binding site.

It belongs to the ABC transporter superfamily. ABCB family. Multidrug resistance exporter (TC 3.A.1.201) subfamily.

The protein localises to the membrane. The enzyme catalyses ATP + H2O + xenobioticSide 1 = ADP + phosphate + xenobioticSide 2.. Its function is as follows. Energy-dependent efflux pump responsible for decreased drug accumulation in multidrug resistance parasites. This is Multidrug resistance protein 3 from Entamoeba histolytica (strain ATCC 30459 / HM-1:IMSS / ABRM).